The chain runs to 57 residues: Putative antitoxin VapB4 (57 aa).

Functionally, possibly the antitoxin component of a type II toxin-antitoxin (TA) system. Its cognate toxin is VapC4 (Potential). The sequence is that of Putative antitoxin VapB4 (vapB4) from Methanocaldococcus jannaschii (strain ATCC 43067 / DSM 2661 / JAL-1 / JCM 10045 / NBRC 100440) (Methanococcus jannaschii).